The sequence spans 306 residues: Ornithine carbamoyltransferase (306 aa).

Carbamoyl phosphate contacts are provided by residues 46–49 (STRT), glutamine 73, arginine 97, and 124–127 (HPTQ). Residues asparagine 156, aspartate 220, and 224 to 225 (SM) each bind L-ornithine. Carbamoyl phosphate-binding positions include 260–261 (CL) and arginine 288.

It belongs to the aspartate/ornithine carbamoyltransferase superfamily. OTCase family.

The protein resides in the cytoplasm. The catalysed reaction is carbamoyl phosphate + L-ornithine = L-citrulline + phosphate + H(+). Its pathway is amino-acid biosynthesis; L-arginine biosynthesis; L-arginine from L-ornithine and carbamoyl phosphate: step 1/3. Functionally, reversibly catalyzes the transfer of the carbamoyl group from carbamoyl phosphate (CP) to the N(epsilon) atom of ornithine (ORN) to produce L-citrulline. The sequence is that of Ornithine carbamoyltransferase from Campylobacter jejuni (strain RM1221).